A 208-amino-acid chain; its full sequence is Large ribosomal subunit protein uL3 (208 aa).

Glutamine 149 carries the N5-methylglutamine modification.

This sequence belongs to the universal ribosomal protein uL3 family. As to quaternary structure, part of the 50S ribosomal subunit. Forms a cluster with proteins L14 and L19. In terms of processing, methylated by PrmB.

Functionally, one of the primary rRNA binding proteins, it binds directly near the 3'-end of the 23S rRNA, where it nucleates assembly of the 50S subunit. In Haemophilus influenzae (strain PittGG), this protein is Large ribosomal subunit protein uL3.